The sequence spans 377 residues: MRAIGVFEYITLRAVLACATALLIGLVAGPRVIRRLTEMKIGQAVRAYGPESHLVKTGTPTMGGALILIAIAISTLLWADWTNRFVWVVLLVTFGFGWIGWMDDYRKVVYRDPEGMPARQKFFWQATIGLVAAVYLAFAVSAPANTELWPLFKAWVGSGFTMPLPTRADLIVPFFKSVSYPLGVLGFVALTWAVIVGTSNAVNLTDGLDGLAIMPTVMVGSALGIFAYVVGRVDYSKYLLFPYIPGAAELMVLCAAIGGAGLAFLWFNAYPAQVFMGDVGALALGGALGTIAVIVRQEIVLFIMGGVFVVETLSVMVQVTWFKYTKRKYGQGRRIFRMAPLHHHFEVGGWKETQVVVRFWIITMMLVLVGLSTLKLR.

11 helical membrane-spanning segments follow: residues 9–29 (YITL…LVAG), 59–79 (TPTM…LLWA), 85–105 (FVWV…MDDY), 122–142 (FFWQ…AVSA), 155–175 (WVGS…VPFF), 178–198 (VSYP…IVGT), 210–230 (GLAI…AYVV), 247–267 (AAEL…FLWF), 274–294 (VFMG…IAVI), 299–319 (IVLF…MVQV), and 354–374 (QVVV…LSTL).

This sequence belongs to the glycosyltransferase 4 family. MraY subfamily. The cofactor is Mg(2+).

It localises to the cell inner membrane. It catalyses the reaction UDP-N-acetyl-alpha-D-muramoyl-L-alanyl-gamma-D-glutamyl-meso-2,6-diaminopimeloyl-D-alanyl-D-alanine + di-trans,octa-cis-undecaprenyl phosphate = di-trans,octa-cis-undecaprenyl diphospho-N-acetyl-alpha-D-muramoyl-L-alanyl-D-glutamyl-meso-2,6-diaminopimeloyl-D-alanyl-D-alanine + UMP. The protein operates within cell wall biogenesis; peptidoglycan biosynthesis. Its function is as follows. Catalyzes the initial step of the lipid cycle reactions in the biosynthesis of the cell wall peptidoglycan: transfers peptidoglycan precursor phospho-MurNAc-pentapeptide from UDP-MurNAc-pentapeptide onto the lipid carrier undecaprenyl phosphate, yielding undecaprenyl-pyrophosphoryl-MurNAc-pentapeptide, known as lipid I. The chain is Phospho-N-acetylmuramoyl-pentapeptide-transferase from Bordetella bronchiseptica (strain ATCC BAA-588 / NCTC 13252 / RB50) (Alcaligenes bronchisepticus).